The primary structure comprises 481 residues: Calcium uptake protein 1, mitochondrial (481 aa).

The transit peptide at 1 to 33 (MFRLHSLSALAELAVGSRCYHGGSQPTQMKRRL) directs the protein to the mitochondrion. The disordered stretch occupies residues 58–82 (ESPPSVNNPKSELGDKGKNKDEGEV). The segment covering 69–82 (ELGDKGKNKDEGEV) has biased composition (basic and acidic residues). The tract at residues 101 to 112 (KKKKRSGFRDRK) is polybasic region. S124 is modified (phosphoserine). Residues 128-131 (KIFR) are k/R-ring. An EF-hand 1 domain is found at 220–255 (TPQRNFEIAFKMFDLNGDGEVDMEEFEQASCPGNII). Residues D233, N235, D237, E239, and E244 each contribute to the Ca(2+) site. A k/R-ring region spans residues 264 to 268 (RHRDR). In terms of domain architecture, EF-hand 2 spans 413–448 (LSDHVCDVVFALFDCDGNGELSNKEFVSIMKQRLMR). Residues D426, D428, N430, E432, and E437 each contribute to the Ca(2+) site. An Asymmetric dimethylarginine modification is found at R460. A C-helix region region spans residues 460-470 (RLMQAMWKCAQ).

This sequence belongs to the MICU1 family. MICU1 subfamily. As to quaternary structure, heterodimer; disulfide-linked; heterodimerizes with MICU2 or MICU3. Homodimer; disulfide-linked. Component of the uniplex complex, composed of MCU, EMRE/SMDT1, MICU1 and MICU2 (or MICU3) in a 4:4:1:1 stoichiometry. The composition of calcium sensors within the uniplex complex can differ depending on tissues: a MICU1 homodimer can be present instead of the MICU1-MICU2 heterodimer in skeletal-muscle and kidney. MICU1 is recruited to the uniplex complex by EMRE/SMDT1, and it associates with MCU at low calcium levels, occluding the pore of the MCU channel. Associates with the MICOS complex. Interacts with SLC25A23. Interacts with CHCHD4/MIA40; which introduces the interchain disulfide bond with MICU2. Interacts (when methylated) with UCP2; leading to decrease the calcium sensitivity of MICU1. Post-translationally, phosphorylation at Ser-124 by AKT1 impairs its maturation and stability. In terms of processing, asymmetric dimethylation at Arg-460 by PRMT1 decreases the calcium sensitivity of MICU1 by promoting interaction with UCP2. Degraded by YME1L1 when not complexed as homodimer or heterodimer. Not degraded when complexed as homodimer or heterodimer; the presence of the interchain disulfide bond protecting MICU1 from degradation by YME1L1.

The protein localises to the mitochondrion intermembrane space. The protein resides in the mitochondrion inner membrane. Its function is as follows. Calcium sensor of the mitochondrial calcium uniporter (MCU) channel, which senses calcium level via its EF-hand domains. MICU1 and MICU2 (or MICU3) form a disulfide-linked heterodimer that stimulates and inhibits MCU activity, depending on the concentration of calcium. At low calcium levels, MICU1 occludes the pore of the MCU channel, preventing mitochondrial calcium uptake. At higher calcium levels, calcium-binding to MICU1 and MICU2 (or MICU3) induces a conformational change that weakens MCU-MICU1 interactions and moves the MICU1-MICU2 heterodimer away from the pore, allowing calcium permeation through the MCU channel. Also required to protect against manganese toxicity by preventing manganese uptake by MCU: mechanistically, manganese-binding to its EF-hand domains does not induce any conformational change, maintaining MCU pore occlusion. Acts as a regulator of mitochondrial cristae structure independently of its ability to regulate the mitochondrial calcium uniporter channel. Regulates glucose-dependent insulin secretion in pancreatic beta-cells by regulating mitochondrial calcium uptake. Induces T-helper 1-mediated autoreactivity, which is accompanied by the release of IFNG. This is Calcium uptake protein 1, mitochondrial (MICU1) from Ailuropoda melanoleuca (Giant panda).